The chain runs to 456 residues: uncharacterized protein (456 aa).

Helical transmembrane passes span 12–32 (SFIW…YLTL), 63–83 (FAAL…VGVA), 86–106 (VQAG…LGMA), 143–163 (WLAK…IGTF), 179–199 (IPVL…ILGG), 208–228 (SVIV…IILL), 237–257 (ILLI…AVGL), 305–325 (FLDT…TGAW), 348–368 (IGAT…ILGW), 390–410 (LAYI…IWII), and 414–434 (VNGL…KVII).

The protein belongs to the alanine or glycine:cation symporter (AGCS) (TC 2.A.25) family.

It localises to the cell inner membrane. This is an uncharacterized protein from Haemophilus influenzae (strain ATCC 51907 / DSM 11121 / KW20 / Rd).